We begin with the raw amino-acid sequence, 917 residues long: Isoleucine--tRNA ligase (917 aa).

Residues 57-67 (PYANGNLHMGH) carry the 'HIGH' region motif. Glu554 contributes to the L-isoleucyl-5'-AMP binding site. A 'KMSKS' region motif is present at residues 595–599 (KMSKS). Lys598 is a binding site for ATP. 4 residues coordinate Zn(2+): Cys886, Cys889, Cys906, and Cys909.

This sequence belongs to the class-I aminoacyl-tRNA synthetase family. IleS type 1 subfamily. In terms of assembly, monomer. It depends on Zn(2+) as a cofactor.

Its subcellular location is the cytoplasm. It catalyses the reaction tRNA(Ile) + L-isoleucine + ATP = L-isoleucyl-tRNA(Ile) + AMP + diphosphate. Its function is as follows. Catalyzes the attachment of isoleucine to tRNA(Ile). As IleRS can inadvertently accommodate and process structurally similar amino acids such as valine, to avoid such errors it has two additional distinct tRNA(Ile)-dependent editing activities. One activity is designated as 'pretransfer' editing and involves the hydrolysis of activated Val-AMP. The other activity is designated 'posttransfer' editing and involves deacylation of mischarged Val-tRNA(Ile). The chain is Isoleucine--tRNA ligase from Staphylococcus aureus (strain Mu3 / ATCC 700698).